The chain runs to 48 residues: Phospholipase A2 TI-Nh (48 aa).

Residue histidine 25 is part of the active site. Aspartate 26 is a Ca(2+) binding site.

Belongs to the phospholipase A2 family. Group I subfamily. D49 sub-subfamily. As to quaternary structure, monomer. It depends on Ca(2+) as a cofactor. Expressed by the venom gland.

Its subcellular location is the secreted. It catalyses the reaction a 1,2-diacyl-sn-glycero-3-phosphocholine + H2O = a 1-acyl-sn-glycero-3-phosphocholine + a fatty acid + H(+). Its function is as follows. Phospholipase A2 with weak enzymatic activity, which partially inhibits thrombin enzymatic activity (Ki=73 nM), completely inhibits thrombin-induced platelet aggregation and retards fibrin clot formation (IC(50)=0.2 nM). May exert this anticoagulant effect through a non-enzymatic mechanism. This is Phospholipase A2 TI-Nh from Naja haje haje (Egyptian cobra).